A 143-amino-acid chain; its full sequence is Transcriptional regulator MraZ (143 aa).

2 consecutive SpoVT-AbrB domains span residues 5–47 (THHP…PRAE) and 76–119 (TDEQ…NAER).

This sequence belongs to the MraZ family. As to quaternary structure, forms oligomers.

It localises to the cytoplasm. Its subcellular location is the nucleoid. This Saccharopolyspora erythraea (strain ATCC 11635 / DSM 40517 / JCM 4748 / NBRC 13426 / NCIMB 8594 / NRRL 2338) protein is Transcriptional regulator MraZ.